Reading from the N-terminus, the 804-residue chain is Probable phosphoketolase (804 aa).

This sequence belongs to the XFP family. Requires thiamine diphosphate as cofactor.

The sequence is that of Probable phosphoketolase from Mycobacterium avium (strain 104).